A 145-amino-acid chain; its full sequence is QFDAETMTLHHDKHHATYVANANAALEKHPEIGENLKELLADVTKIPADIRQALINNGGGHLNHALFWELLSPEKQEITADVAQAIDEAFGSFDAFKEQFTAAATGRFGSGWAWLVVNKEGQLEITSTANQDTPISEGKKPILAL.

2 residues coordinate Fe(3+): His10 and His64. The Mn(2+) site is built by His10 and His64.

The protein belongs to the iron/manganese superoxide dismutase family. Mn(2+) is required as a cofactor. It depends on Fe(3+) as a cofactor.

The catalysed reaction is 2 superoxide + 2 H(+) = H2O2 + O2. Its function is as follows. Destroys superoxide anion radicals which are normally produced within the cells and which are toxic to biological systems. Catalyzes the dismutation of superoxide anion radicals into O2 and H2O2 by successive reduction and oxidation of the transition metal ion at the active site. The protein is Superoxide dismutase [Mn/Fe] (sodA) of Streptococcus canis.